The sequence spans 160 residues: MGVTKKPDLNDPVLRAKLAKGMGHNYYGEPAWPNDLLYIFPVVILGTIACNVGLAVLEPSMIGEPADPFATPLEILPEWYFFPVFQILRTVPNKLLGVLLMVSVPAGLLTVPFLENVNKFQNPFRRPVATTVFLIGTAAALWLGIGATLPIDKSLTLGLF.

A run of 3 helical transmembrane segments spans residues 36 to 56, 95 to 115, and 131 to 151; these read LLYIFPVVILGTIACNVGLAV, LLGVLLMVSVPAGLLTVPFLE, and TVFLIGTAAALWLGIGATLPI.

Belongs to the cytochrome b family. PetD subfamily. As to quaternary structure, the 4 large subunits of the cytochrome b6-f complex are cytochrome b6, subunit IV (17 kDa polypeptide, petD), cytochrome f and the Rieske protein, while the 4 small subunits are petG, petL, petM and petN. The complex functions as a dimer.

The protein resides in the plastid. The protein localises to the chloroplast thylakoid membrane. Functionally, component of the cytochrome b6-f complex, which mediates electron transfer between photosystem II (PSII) and photosystem I (PSI), cyclic electron flow around PSI, and state transitions. This is Cytochrome b6-f complex subunit 4 from Arabidopsis thaliana (Mouse-ear cress).